Here is a 261-residue protein sequence, read N- to C-terminus: V-type proton ATPase subunit D (261 aa).

A Phosphoserine modification is found at serine 241.

This sequence belongs to the V-ATPase D subunit family. In terms of assembly, V-ATPase is a heteromultimeric enzyme composed of a peripheral catalytic V1 complex (components A to H) attached to an integral membrane V0 proton pore complex (components: a, c, c'', d and e).

Its subcellular location is the vacuole membrane. Functionally, subunit of the peripheral V1 complex of vacuolar ATPase. V-ATPase is responsible for acidifying a variety of intracellular compartments in eukaryotic cells, thus providing most of the energy required for transport processes in the vacuolar system. In Arabidopsis thaliana (Mouse-ear cress), this protein is V-type proton ATPase subunit D (VHA-D).